A 248-amino-acid chain; its full sequence is Tyrosine recombinase XerD-like (248 aa).

A Core-binding (CB) domain is found at 1–72 (MKSYIEPFIA…TANQFLYYLY (72 aa)). Positions 85–248 (DTMKVMRTEK…PVTLEKYYKS (164 aa)) constitute a Tyr recombinase domain. Residues lysine 149 and arginine 213 contribute to the active site. The O-(3'-phospho-DNA)-tyrosine intermediate role is filled by tyrosine 245.

The protein belongs to the 'phage' integrase family. XerD-like subfamily.

It is found in the cytoplasm. Its function is as follows. Putative tyrosine recombinase. Not involved in the cutting and rejoining of the recombining DNA molecules on dif(SL) site. In Streptococcus pyogenes serotype M6 (strain ATCC BAA-946 / MGAS10394), this protein is Tyrosine recombinase XerD-like.